The primary structure comprises 453 residues: Mitochondrial import inner membrane translocase subunit TIM44 (453 aa).

At Thr-129 the chain carries Phosphothreonine. Residue 167 to 174 (GGEKLGKT) participates in ATP binding. N6-succinyllysine is present on Lys-178. At Ser-181 the chain carries Phosphoserine. An N6-succinyllysine modification is found at Lys-218.

The protein belongs to the Tim44 family. As to quaternary structure, probable component of the PAM complex at least composed of a mitochondrial HSP70 protein, GRPEL1 or GRPEL2, TIMM44, TIMM16/PAM16 and TIMM14/DNAJC19. The complex interacts with the TIMM23 component of the TIM23 complex. Interacts with SLC25A4/ANT1 and SLC25A5/ANT2; leading to inhibit the presequence translocase TIMM23, thereby promoting stabilization of PINK1.

It localises to the mitochondrion inner membrane. It is found in the mitochondrion matrix. Essential component of the PAM complex, a complex required for the translocation of transit peptide-containing proteins from the inner membrane into the mitochondrial matrix in an ATP-dependent manner. Recruits mitochondrial HSP70 to drive protein translocation into the matrix using ATP as an energy source. The sequence is that of Mitochondrial import inner membrane translocase subunit TIM44 (Timm44) from Rattus norvegicus (Rat).